Here is a 609-residue protein sequence, read N- to C-terminus: Glutamine--fructose-6-phosphate aminotransferase [isomerizing] (609 aa).

Cys2 functions as the Nucleophile; for GATase activity in the catalytic mechanism. One can recognise a Glutamine amidotransferase type-2 domain in the interval 2-217 (CGIVGAIAGR…EGDTAELRRD (216 aa)). 2 consecutive SIS domains span residues 284–425 (TADA…LQGR) and 458–599 (WAER…VDKP). Lys604 serves as the catalytic For Fru-6P isomerization activity.

Homodimer.

The protein localises to the cytoplasm. It catalyses the reaction D-fructose 6-phosphate + L-glutamine = D-glucosamine 6-phosphate + L-glutamate. Functionally, catalyzes the first step in hexosamine metabolism, converting fructose-6P into glucosamine-6P using glutamine as a nitrogen source. This Xanthomonas campestris pv. campestris (strain ATCC 33913 / DSM 3586 / NCPPB 528 / LMG 568 / P 25) protein is Glutamine--fructose-6-phosphate aminotransferase [isomerizing].